We begin with the raw amino-acid sequence, 345 residues long: MAAPASDSGGSQQSPSSSPGSREGAGVAAKGAPDCGDAGARDAAETVSGLPPLEDYECKICYNYFDADRRAPKLLACLHTFCQECLSQLQLRAAAAAAAAAAPERPPRPPPWLCPPGAIACPVCRHRTPLPDSRVHGLPNNTKLAEAFPLALRAAHDPLPQDRLPPLPARLPAPAAAPPPTPAPPPPPSPAPPQPPPPPPAEDAAPGPRARPGLRAPGAYDSCQNCKRAALTAGCVCVVFSFLSMVVLLFTGLIFVNHYGGGGTPGGGAPPGEAPATGSPSPSPVGPICLSVASILALFSVVVTWVICWLKYRPEGAAAGSTGGSGGGGGPRARAAAGGARRSDT.

Over residues 1–21 (MAAPASDSGGSQQSPSSSPGS) the composition is skewed to low complexity. Positions 1–43 (MAAPASDSGGSQQSPSSSPGSREGAGVAAKGAPDCGDAGARDA) are disordered. The RING-type zinc-finger motif lies at 58-125 (CKICYNYFDA…PGAIACPVCR (68 aa)). Positions 159 to 213 (LPQDRLPPLPARLPAPAAAPPPTPAPPPPPSPAPPQPPPPPPAEDAAPGPRARPG) are disordered. The span at 163–201 (RLPPLPARLPAPAAAPPPTPAPPPPPSPAPPQPPPPPPA) shows a compositional bias: pro residues. Residues 202-213 (EDAAPGPRARPG) are compositionally biased toward low complexity. Helical transmembrane passes span 236-256 (VCVV…LIFV) and 290-310 (LSVA…ICWL). Positions 319 to 345 (AGSTGGSGGGGGPRARAAAGGARRSDT) are disordered. The segment covering 321–331 (STGGSGGGGGP) has biased composition (gly residues). A compositionally biased stretch (low complexity) spans 332–345 (RARAAAGGARRSDT).

It is found in the membrane. The polypeptide is RING finger protein 228 (Homo sapiens (Human)).